Reading from the N-terminus, the 83-residue chain is MGVKLNICLLLLLVAIISSQGFNLRKKEDSKDEKPFGNYRRGSPCSNYEGSCTPNHIPCPPGSHECRQLPGCYPGVERCCCQY.

A signal peptide spans 1–21 (MGVKLNICLLLLLVAIISSQG). Positions 22 to 39 (FNLRKKEDSKDEKPFGNY) are excised as a propeptide. Positions 25 to 35 (RKKEDSKDEKP) are enriched in basic and acidic residues. The tract at residues 25–44 (RKKEDSKDEKPFGNYRRGSP) is disordered.

The protein belongs to the Cnidaria small cysteine-rich protein (SCRiP) family. alpha subfamily. Post-translationally, contains 4 disulfide bonds.

It is found in the secreted. The protein resides in the nematocyst. Functionally, this recombinant protein induces severe neurotoxicity on zebrafish larvae (Danio rerio) at a concentration of 230 mg/ml, but does not show toxicity when injected in blowfly larvae (Sarcophaga falculata). All fish incubated with this protein died within 16 hours of exposure. Has also been claimed to be implied in calcification, but this function seems improbable. The chain is Small cysteine-rich protein 3 from Acropora millepora (Staghorn coral).